Consider the following 84-residue polypeptide: Anaphase-promoting complex subunit 11 (84 aa).

Cys-23, Cys-26, Cys-34, Cys-37, Cys-44, Cys-51, His-53, His-56, His-58, Cys-59, Cys-73, and Cys-76 together coordinate Zn(2+). The RING-type zinc finger occupies 34 to 77 (CPDCKVPGDDCPLVWGQCSHCFHMHCILKWLHAQQVQQHCPMCR).

It belongs to the RING-box family. In terms of assembly, the mammalian APC/C is composed at least of 14 distinct subunits ANAPC1, ANAPC2, CDC27/APC3, ANAPC4, ANAPC5, CDC16/APC6, ANAPC7, CDC23/APC8, ANAPC10, ANAPC11, CDC26/APC12, ANAPC13, ANAPC15 and ANAPC16 that assemble into a complex of at least 19 chains with a combined molecular mass of around 1.2 MDa; APC/C interacts with FZR1 and FBXO5. Interacts with the cullin domain of ANAPC2. Interacts with UBE2D2. Post-translationally, auto-ubiquitinated. In terms of tissue distribution, expressed at high levels in skeletal muscle and heart; in moderate levels in brain, kidney, and liver; and at low levels in colon, thymus, spleen, small intestine, placenta, lung and peripheral blood leukocyte.

The protein localises to the cytoplasm. It is found in the nucleus. It participates in protein modification; protein ubiquitination. Its function is as follows. Together with the cullin protein ANAPC2, constitutes the catalytic component of the anaphase promoting complex/cyclosome (APC/C), a cell cycle-regulated E3 ubiquitin ligase that controls progression through mitosis and the G1 phase of the cell cycle. The APC/C complex acts by mediating ubiquitination and subsequent degradation of target proteins: it mainly mediates the formation of 'Lys-11'-linked polyubiquitin chains and, to a lower extent, the formation of 'Lys-48'- and 'Lys-63'-linked polyubiquitin chains. The APC/C complex catalyzes assembly of branched 'Lys-11'-/'Lys-48'-linked branched ubiquitin chains on target proteins. May recruit the E2 ubiquitin-conjugating enzymes to the complex. The sequence is that of Anaphase-promoting complex subunit 11 (ANAPC11) from Homo sapiens (Human).